The primary structure comprises 369 residues: Flagellar P-ring protein (369 aa).

An N-terminal signal peptide occupies residues 1-22 (MIKLKQLIAATLLLSAAFGAHA).

Belongs to the FlgI family. In terms of assembly, the basal body constitutes a major portion of the flagellar organelle and consists of four rings (L,P,S, and M) mounted on a central rod.

The protein resides in the periplasm. Its subcellular location is the bacterial flagellum basal body. Its function is as follows. Assembles around the rod to form the L-ring and probably protects the motor/basal body from shearing forces during rotation. In Pseudomonas syringae pv. tomato (strain ATCC BAA-871 / DC3000), this protein is Flagellar P-ring protein.